The following is a 625-amino-acid chain: DNA mismatch repair protein MutL (625 aa).

Belongs to the DNA mismatch repair MutL/HexB family.

Functionally, this protein is involved in the repair of mismatches in DNA. It is required for dam-dependent methyl-directed DNA mismatch repair. May act as a 'molecular matchmaker', a protein that promotes the formation of a stable complex between two or more DNA-binding proteins in an ATP-dependent manner without itself being part of a final effector complex. The chain is DNA mismatch repair protein MutL from Bacteroides fragilis (strain YCH46).